Reading from the N-terminus, the 591-residue chain is Probable translation initiation factor IF-2 (591 aa).

A tr-type G domain is found at 7–223 (LRTPIVCVMG…LLGLAQKFLE (217 aa)). The tract at residues 16-23 (GHVDHGKT) is G1. GTP is bound at residue 16-23 (GHVDHGKT). The segment at 41 to 45 (AITQH) is G2. Residues 78–81 (DTPG) are G3. GTP-binding positions include 78–82 (DTPGH) and 132–135 (NKID). A G4 region spans residues 132 to 135 (NKID). A G5 region spans residues 200–202 (SAM).

The protein belongs to the TRAFAC class translation factor GTPase superfamily. Classic translation factor GTPase family. IF-2 subfamily.

In terms of biological role, function in general translation initiation by promoting the binding of the formylmethionine-tRNA to ribosomes. Seems to function along with eIF-2. This is Probable translation initiation factor IF-2 from Methanosarcina barkeri (strain Fusaro / DSM 804).